Here is a 51-residue protein sequence, read N- to C-terminus: FNKLKQGSSKRTCAKCFRKIMPSVHELDERRRGANRWAAGFRKCVSSICRY.

Functionally, antibacterial activity against both Gram-negative and Gram-positive bacteria. Shows marked activity against P.aeruginosa, B.megaterium, A.viridans, moderate activity against E.coli K-12, S.aureus and M.luteus, and minor activity against P.vulgaris. Antifungal activity against P.heliothis. The sequence is that of Perinerin from Perinereis aibuhitensis (Korean lugworm).